A 217-amino-acid chain; its full sequence is MDKFIVHTGVVAPLDRENVDTDAIIPKQFLKSIKRTGFGPNAFDEWRYLDHGEPGQDNSKRPLNPDFVLNQPRYQGASILLTRQNFGCGSSREHAPWALQQYGFRAIIAPSFADIFYNNCFKNGLLPIVLTEQQVDHLFNETFAFNGFQLTVDLEKQVVRTTDGGTEYPFEVAAFRKYCLLNGFDDIGLTLRHADKIRQYEAERIAKQPWLNNRLVR.

This sequence belongs to the LeuD family. LeuD type 1 subfamily. Heterodimer of LeuC and LeuD.

It carries out the reaction (2R,3S)-3-isopropylmalate = (2S)-2-isopropylmalate. Its pathway is amino-acid biosynthesis; L-leucine biosynthesis; L-leucine from 3-methyl-2-oxobutanoate: step 2/4. Catalyzes the isomerization between 2-isopropylmalate and 3-isopropylmalate, via the formation of 2-isopropylmaleate. This chain is 3-isopropylmalate dehydratase small subunit, found in Paraburkholderia phymatum (strain DSM 17167 / CIP 108236 / LMG 21445 / STM815) (Burkholderia phymatum).